The chain runs to 247 residues: Protein GrpE (247 aa).

Over residues 31 to 49 (QKEETKTTNKDNQKEDETV) the composition is skewed to basic and acidic residues. Positions 31 to 79 (QKEETKTTNKDNQKEDETVKNQSNQSNQSNQTKQTNTKQQKHQPKENSH) are disordered. The segment covering 50–68 (KNQSNQSNQSNQTKQTNTK) has biased composition (low complexity).

This sequence belongs to the GrpE family. Homodimer.

It is found in the cytoplasm. Participates actively in the response to hyperosmotic and heat shock by preventing the aggregation of stress-denatured proteins, in association with DnaK and GrpE. It is the nucleotide exchange factor for DnaK and may function as a thermosensor. Unfolded proteins bind initially to DnaJ; upon interaction with the DnaJ-bound protein, DnaK hydrolyzes its bound ATP, resulting in the formation of a stable complex. GrpE releases ADP from DnaK; ATP binding to DnaK triggers the release of the substrate protein, thus completing the reaction cycle. Several rounds of ATP-dependent interactions between DnaJ, DnaK and GrpE are required for fully efficient folding. The chain is Protein GrpE from Onion yellows phytoplasma (strain OY-M).